Here is a 29-residue protein sequence, read N- to C-terminus: uncharacterized protein (29 aa).

Residues 1–29 (MFKMKFGDTLPRSDFGTGGNKQAPGLELG) form a disordered region.

This is an uncharacterized protein from Saccharomyces cerevisiae (strain ATCC 204508 / S288c) (Baker's yeast).